The chain runs to 231 residues: MIKDERWEGVYSFEDSPYLMETLTDLRKISTENISFRKGLVRLGRYMGYELTKTMEFEKMPIQTPLEKTEGVFAKDRKNVVIITILRAAFPLMEGLIKNFESAKVGIVSASRGHAPDFKIEMNYIKVPQLNPEDTVIVSDPMIATGSTLIHVLKEFRDSKPKRMMIVGVLAAPEGINAVKKEFSDVEIFVTKIDENLNKDGYIVPGLGDAGDRAFGEPFKVPMLPQMHNLE.

Residue 38–42 participates in GTP binding; it reads KGLVR. Residues arginine 87, arginine 112, and 140-148 each bind 5-phospho-alpha-D-ribose 1-diphosphate; that span reads DPMIATGST. Residues isoleucine 203 and 208-210 contribute to the uracil site; that span reads GDA. Aspartate 209 is a binding site for 5-phospho-alpha-D-ribose 1-diphosphate.

Belongs to the UPRTase family. The cofactor is Mg(2+).

The enzyme catalyses UMP + diphosphate = 5-phospho-alpha-D-ribose 1-diphosphate + uracil. The protein operates within pyrimidine metabolism; UMP biosynthesis via salvage pathway; UMP from uracil: step 1/1. Allosterically activated by GTP. Its function is as follows. Catalyzes the conversion of uracil and 5-phospho-alpha-D-ribose 1-diphosphate (PRPP) to UMP and diphosphate. The polypeptide is Uracil phosphoribosyltransferase (Methanococcus maripaludis (strain C5 / ATCC BAA-1333)).